Here is a 181-residue protein sequence, read N- to C-terminus: Transcriptional repressor NrdR (181 aa).

A zinc finger lies at 3 to 34; the sequence is CLFCQHTYTRVIDSRVSEDGATIRRRRECEAC. One can recognise an ATP-cone domain in the interval 49–139; sequence PVIIKKDGGR…VYRSFQDVAD (91 aa).

Belongs to the NrdR family. Zn(2+) serves as cofactor.

Functionally, negatively regulates transcription of bacterial ribonucleotide reductase nrd genes and operons by binding to NrdR-boxes. This Xylella fastidiosa (strain 9a5c) protein is Transcriptional repressor NrdR.